A 121-amino-acid polypeptide reads, in one-letter code: Auxin-responsive protein SAUR32 (121 aa).

It belongs to the ARG7 family. In terms of tissue distribution, expressed in roots, leaves and stems.

The protein localises to the nucleus. It is found in the cytoplasm. May play a role in the apical hook development. The chain is Auxin-responsive protein SAUR32 from Arabidopsis thaliana (Mouse-ear cress).